Here is a 709-residue protein sequence, read N- to C-terminus: Ral guanine nucleotide dissociation stimulator-like 3 (709 aa).

A disordered region spans residues 26 to 55 (VYSVSLRRQRSQRSTPERSGEGQTPIPATD). The 138-residue stretch at 64–201 (KVRALRAARL…LLEDFLKEAK (138 aa)) folds into the N-terminal Ras-GEF domain. 3 disordered regions span residues 203 to 225 (EQTE…TPGS), 395 to 416 (SQEE…KLPP), and 502 to 604 (PPAA…SRVP). The Ras-GEF domain maps to 248 to 503 (SVDDVAEQLT…YRVSRVIEPP (256 aa)). Composition is skewed to low complexity over residues 502–511 (PPAASCPSSP) and 533–551 (SSPG…SVSP). 2 positions are modified to phosphoserine: Ser-506 and Ser-510. Residues 552–576 (GSPPSSPRNREPPPPGSPPASPGPQ) show a composition bias toward pro residues. Ser-553, Ser-568, Ser-572, Ser-577, and Ser-600 each carry phosphoserine. The interaction with HRAS, MRAS and RIT1 stretch occupies residues 611–706 (SEARVIRVSI…KEGTGHTLSA (96 aa)). The Ras-associating domain maps to 612–699 (EARVIRVSIN…GDFLLRRKEG (88 aa)).

In terms of assembly, interacts with GTP-bound forms of RIT1, HRAS and MRAS. Widely expressed. Expressed at high levels in the liver and kidney.

Its function is as follows. Guanine nucleotide exchange factor (GEF) for Ral-A. Potential effector of GTPase HRas and Ras-related protein M-Ras. Negatively regulates Elk-1-dependent gene induction downstream of HRas and MEKK1. In Mus musculus (Mouse), this protein is Ral guanine nucleotide dissociation stimulator-like 3 (Rgl3).